The sequence spans 627 residues: Altered inheritance of mitochondria protein 9, mitochondrial (627 aa).

The transit peptide at 1–43 (MIRYTVAGHSRRCVVGASKRVGAIKCITVAATKRFISNKSNEV) directs the protein to the mitochondrion.

It belongs to the AIM9 family.

The protein localises to the mitochondrion. The chain is Altered inheritance of mitochondria protein 9, mitochondrial (AIM9) from Saccharomyces cerevisiae (strain JAY291) (Baker's yeast).